The sequence spans 151 residues: Phospholipase A2 inhibitor BjussuMIP (151 aa).

A signal peptide spans 1–4; sequence LANG. The 116-residue stretch at 31-146 folds into the C-type lectin domain; the sequence is LKYAFLTVHK…CDENLLVVCE (116 aa). Intrachain disulfides connect Cys68/Cys145 and Cys123/Cys137. Asn107 is a glycosylation site (N-linked (GlcNAc...) asparagine).

Belongs to the alpha-type phospholipase A2 inhibitor family. Oligomer. Expressed by the liver.

Its subcellular location is the secreted. Functionally, inhibits enzymatic, anticoagulant, edema formation, myotoxicity activities induced by snakes phospholipase A2. Is oligomeric, but it is probable that each of its subunits can bind and inactive a PLA2 molecule. The sequence is that of Phospholipase A2 inhibitor BjussuMIP from Bothrops jararacussu (Jararacussu).